The following is a 31-amino-acid chain: MESVAYILILTMALAVLFFAIAFREPPRIEK.

A helical membrane pass occupies residues 3–23 (SVAYILILTMALAVLFFAIAF).

Belongs to the PsbT family. PSII is composed of 1 copy each of membrane proteins PsbA, PsbB, PsbC, PsbD, PsbE, PsbF, PsbH, PsbI, PsbJ, PsbK, PsbL, PsbM, PsbT, PsbX, PsbY, PsbZ, Psb30/Ycf12, peripheral proteins PsbO, CyanoQ (PsbQ), PsbU, PsbV and a large number of cofactors. It forms dimeric complexes.

Its subcellular location is the cellular thylakoid membrane. Functionally, found at the monomer-monomer interface of the photosystem II (PS II) dimer, plays a role in assembly and dimerization of PSII. PSII is a light-driven water plastoquinone oxidoreductase, using light energy to abstract electrons from H(2)O, generating a proton gradient subsequently used for ATP formation. The chain is Photosystem II reaction center protein T from Gloeothece citriformis (strain PCC 7424) (Cyanothece sp. (strain PCC 7424)).